The chain runs to 300 residues: NAD kinase (300 aa).

The active-site Proton acceptor is D75. NAD(+) is bound by residues 75–76 (DG), 149–150 (ND), R177, D179, 190–195 (TAYALS), A214, and Q248.

The protein belongs to the NAD kinase family. A divalent metal cation serves as cofactor.

It is found in the cytoplasm. It catalyses the reaction NAD(+) + ATP = ADP + NADP(+) + H(+). Involved in the regulation of the intracellular balance of NAD and NADP, and is a key enzyme in the biosynthesis of NADP. Catalyzes specifically the phosphorylation on 2'-hydroxyl of the adenosine moiety of NAD to yield NADP. This Paraburkholderia phymatum (strain DSM 17167 / CIP 108236 / LMG 21445 / STM815) (Burkholderia phymatum) protein is NAD kinase.